A 47-amino-acid chain; its full sequence is Delta-ctenitoxin-Pr2d (47 aa).

5 disulfides stabilise this stretch: C3-C17, C10-C23, C14-C46, C16-C31, and C25-C29.

Expressed by the venom gland.

The protein resides in the secreted. Functionally, blocks voltage-gated sodium channels (Nav). Causes rapid general spastic paralysis and death when injected in mice at dose levels of less than 2 ug per mouse. The chain is Delta-ctenitoxin-Pr2d from Phoneutria reidyi (Brazilian Amazonian armed spider).